Reading from the N-terminus, the 212-residue chain is Phosphoribosylglycinamide formyltransferase (212 aa).

A N(1)-(5-phospho-beta-D-ribosyl)glycinamide-binding site is contributed by 12-14 (GTN). (6R)-10-formyltetrahydrofolate contacts are provided by residues 90 to 93 (MKIL) and Asn107. Residue His109 is the Proton donor of the active site.

It belongs to the GART family.

It carries out the reaction N(1)-(5-phospho-beta-D-ribosyl)glycinamide + (6R)-10-formyltetrahydrofolate = N(2)-formyl-N(1)-(5-phospho-beta-D-ribosyl)glycinamide + (6S)-5,6,7,8-tetrahydrofolate + H(+). It participates in purine metabolism; IMP biosynthesis via de novo pathway; N(2)-formyl-N(1)-(5-phospho-D-ribosyl)glycinamide from N(1)-(5-phospho-D-ribosyl)glycinamide (10-formyl THF route): step 1/1. Functionally, catalyzes the transfer of a formyl group from 10-formyltetrahydrofolate to 5-phospho-ribosyl-glycinamide (GAR), producing 5-phospho-ribosyl-N-formylglycinamide (FGAR) and tetrahydrofolate. The chain is Phosphoribosylglycinamide formyltransferase from Haemophilus influenzae (strain ATCC 51907 / DSM 11121 / KW20 / Rd).